Here is a 388-residue protein sequence, read N- to C-terminus: Dual-specificity RNA methyltransferase RlmN (388 aa).

Catalysis depends on E109, which acts as the Proton acceptor. A Radical SAM core domain is found at 115-354 (EDDRATLCVS…TIVRKTRGDD (240 aa)). Cysteines 122 and 359 form a disulfide. The [4Fe-4S] cluster site is built by C129, C133, and C136. S-adenosyl-L-methionine-binding positions include 183-184 (GE), S215, 237-239 (SLH), and N316. C359 serves as the catalytic S-methylcysteine intermediate.

It belongs to the radical SAM superfamily. RlmN family. [4Fe-4S] cluster serves as cofactor.

It localises to the cytoplasm. The enzyme catalyses adenosine(2503) in 23S rRNA + 2 reduced [2Fe-2S]-[ferredoxin] + 2 S-adenosyl-L-methionine = 2-methyladenosine(2503) in 23S rRNA + 5'-deoxyadenosine + L-methionine + 2 oxidized [2Fe-2S]-[ferredoxin] + S-adenosyl-L-homocysteine. It catalyses the reaction adenosine(37) in tRNA + 2 reduced [2Fe-2S]-[ferredoxin] + 2 S-adenosyl-L-methionine = 2-methyladenosine(37) in tRNA + 5'-deoxyadenosine + L-methionine + 2 oxidized [2Fe-2S]-[ferredoxin] + S-adenosyl-L-homocysteine. Functionally, specifically methylates position 2 of adenine 2503 in 23S rRNA and position 2 of adenine 37 in tRNAs. m2A2503 modification seems to play a crucial role in the proofreading step occurring at the peptidyl transferase center and thus would serve to optimize ribosomal fidelity. The chain is Dual-specificity RNA methyltransferase RlmN from Salmonella arizonae (strain ATCC BAA-731 / CDC346-86 / RSK2980).